The sequence spans 309 residues: Probable lipid kinase YegS-like (309 aa).

The 134-residue stretch at 1 to 134 folds into the DAGKc domain; that stretch reads MAPSHWRLIL…VDLLRIDAEH (134 aa). ATP contacts are provided by residues Thr39, 65 to 71, and Thr96; that span reads GDGTLSE. 3 residues coordinate Mg(2+): Val219, Asp222, and Leu224. Glu280 acts as the Proton acceptor in catalysis.

Belongs to the diacylglycerol/lipid kinase family. YegS lipid kinase subfamily. Requires Mg(2+) as cofactor. Ca(2+) is required as a cofactor.

Its subcellular location is the cytoplasm. Functionally, probably phosphorylates lipids; the in vivo substrate is unknown. In Xanthomonas oryzae pv. oryzae (strain MAFF 311018), this protein is Probable lipid kinase YegS-like.